A 473-amino-acid chain; its full sequence is Ribulose bisphosphate carboxylase large chain (473 aa).

Substrate contacts are provided by asparagine 116 and threonine 166. The Proton acceptor role is filled by lysine 168. Lysine 170 contributes to the substrate binding site. Residues lysine 194, aspartate 196, and glutamate 197 each contribute to the Mg(2+) site. The residue at position 194 (lysine 194) is an N6-carboxylysine. Histidine 287 acts as the Proton acceptor in catalysis. The substrate site is built by arginine 288, histidine 320, and serine 372.

The protein belongs to the RuBisCO large chain family. Type I subfamily. In terms of assembly, heterohexadecamer of 8 large chains and 8 small chains. Mg(2+) is required as a cofactor.

It catalyses the reaction 2 (2R)-3-phosphoglycerate + 2 H(+) = D-ribulose 1,5-bisphosphate + CO2 + H2O. It carries out the reaction D-ribulose 1,5-bisphosphate + O2 = 2-phosphoglycolate + (2R)-3-phosphoglycerate + 2 H(+). Functionally, ruBisCO catalyzes two reactions: the carboxylation of D-ribulose 1,5-bisphosphate, the primary event in carbon dioxide fixation, as well as the oxidative fragmentation of the pentose substrate. Both reactions occur simultaneously and in competition at the same active site. This is Ribulose bisphosphate carboxylase large chain from Halorhodospira halophila (strain DSM 244 / SL1) (Ectothiorhodospira halophila (strain DSM 244 / SL1)).